Reading from the N-terminus, the 540-residue chain is E3 ubiquitin-protein ligase rnf8-A (540 aa).

The FHA domain occupies 30–84 (VTLGRGLGVTYQLKPTLCPLMISRTHCLFKQNTGGEWTVTDNKSLNGVWRNKERL). The disordered stretch occupies residues 128–205 (LIRPLPDKTK…SGTESRLNDS (78 aa)). Composition is skewed to polar residues over residues 152–162 (ASGNEGPSNFS) and 179–200 (SSHT…GTES). The segment at 382–420 (CIICSEHFIEAVTLNCAHSFCSYCIKSWKKRKEECPICR) adopts an RING-type zinc-finger fold. The disordered stretch occupies residues 517–540 (GTDELDSSDFESDDDEEEDSFLII). Acidic residues predominate over residues 519–540 (DELDSSDFESDDDEEEDSFLII).

It belongs to the RNF8 family. In terms of assembly, homodimer. Forms a E2-E3 ubiquitin ligase complex composed of the rnf8 homodimer and a E2 heterodimer of ube2n and ube2v2.

The protein localises to the nucleus. It carries out the reaction S-ubiquitinyl-[E2 ubiquitin-conjugating enzyme]-L-cysteine + [acceptor protein]-L-lysine = [E2 ubiquitin-conjugating enzyme]-L-cysteine + N(6)-ubiquitinyl-[acceptor protein]-L-lysine.. Its pathway is protein modification; protein ubiquitination. Its function is as follows. E3 ubiquitin-protein ligase that plays a key role in DNA damage signaling via 2 distinct roles: by mediating the 'Lys-63'-linked ubiquitination of histones H2A and H2AX and promoting the recruitment of DNA repair proteins at double-strand breaks (DSBs) sites, and by catalyzing 'Lys-48'-linked ubiquitination to remove target proteins from DNA damage sites. Following DNA DSBs, it is recruited to the sites of damage by ATM-phosphorylated mdc1 and catalyzes the 'Lys-63'-linked ubiquitination of histones H2A and H2AX, thereby promoting the formation of tp53bp1 and brca1 ionizing radiation-induced foci (IRIF). H2A ubiquitination also mediates the ATM-dependent transcriptional silencing at regions flanking DSBs in cis, a mechanism to avoid collision between transcription and repair intermediates. Also catalyzes the formation of 'Lys-48'-linked polyubiquitin chains, leading to degradation of substrate proteins. In addition to its function in damage signaling, also plays a role in higher-order chromatin structure by mediating extensive chromatin decondensation. The sequence is that of E3 ubiquitin-protein ligase rnf8-A from Xenopus laevis (African clawed frog).